We begin with the raw amino-acid sequence, 124 residues long: Quinol oxidase subunit 4 (124 aa).

A run of 3 helical transmembrane segments spans residues Ile16–Thr36, Leu44–His64, and Thr78–Ala98.

The protein belongs to the cytochrome c oxidase bacterial subunit 4 family.

Its subcellular location is the cell membrane. It carries out the reaction 2 a quinol + O2 = 2 a quinone + 2 H2O. Functionally, catalyzes quinol oxidation with the concomitant reduction of oxygen to water. Major component for energy conversion during vegetative growth. This is Quinol oxidase subunit 4 (qoxD) from Bacillus subtilis (strain 168).